The following is a 317-amino-acid chain: MPMHGAQRKLLGSLNSTPTATSNLGLAANHTGAPCLEVSIPDGLFLSLGLVSLVENVLVVAAIAKNRNLHSSMYCFICCLALSDLLVSGSNMLETAVILLLEAGALATRTSAMQQLHNTIDVLTCSSMLCSLCFLGAIAVDRYISIFYALRYHSIMTLPRAQRAIAAIWVASXLSSTLFITYYDHAAVLLCLVVFFLAMLVLMAVLYVHMLARACQHAHGIIRLHKRQTPAHQGFGLRGAATLTILLGIFFLCWGPFFLHLTLVVFCPQHLTCSCIFKNFKVFLTLIICNTIIDPLIYAFRSQELRRTLKEVLLCSW.

Topologically, residues 1–37 (MPMHGAQRKLLGSLNSTPTATSNLGLAANHTGAPCLE) are extracellular. N-linked (GlcNAc...) asparagine glycosylation occurs at asparagine 29. The helical transmembrane segment at 38-63 (VSIPDGLFLSLGLVSLVENVLVVAAI) threads the bilayer. At 64-72 (AKNRNLHSS) the chain is on the cytoplasmic side. A helical membrane pass occupies residues 73–93 (MYCFICCLALSDLLVSGSNML). The Extracellular segment spans residues 94-118 (ETAVILLLEAGALATRTSAMQQLHN). A helical membrane pass occupies residues 119-140 (TIDVLTCSSMLCSLCFLGAIAV). Topologically, residues 141–163 (DRYISIFYALRYHSIMTLPRAQR) are cytoplasmic. Residues 164 to 183 (AIAAIWVASXLSSTLFITYY) form a helical membrane-spanning segment. At 184-191 (DHAAVLLC) the chain is on the extracellular side. Residues 192–211 (LVVFFLAMLVLMAVLYVHML) form a helical membrane-spanning segment. Over 212-240 (ARACQHAHGIIRLHKRQTPAHQGFGLRGA) the chain is Cytoplasmic. Residues 241-266 (ATLTILLGIFFLCWGPFFLHLTLVVF) traverse the membrane as a helical segment. Residues 267-279 (CPQHLTCSCIFKN) are Extracellular-facing. Residues 280 to 300 (FKVFLTLIICNTIIDPLIYAF) form a helical membrane-spanning segment. Over 301 to 317 (RSQELRRTLKEVLLCSW) the chain is Cytoplasmic. The S-palmitoyl cysteine moiety is linked to residue cysteine 315.

The protein belongs to the G-protein coupled receptor 1 family. Interacts with MGRN1, but does not undergo MGRN1-mediated ubiquitination; this interaction competes with GNAS-binding and thus inhibits agonist-induced cAMP production. Interacts with OPN3; the interaction results in a decrease in MC1R-mediated cAMP signaling and ultimately a decrease in melanin production in melanocytes.

It is found in the cell membrane. Receptor for MSH (alpha, beta and gamma) and ACTH. The activity of this receptor is mediated by G proteins which activate adenylate cyclase. Mediates melanogenesis, the production of eumelanin (black/brown) and phaeomelanin (red/yellow), via regulation of cAMP signaling in melanocytes. In Saguinus midas (Golden-handed tamarin), this protein is Melanocyte-stimulating hormone receptor (MC1R).